Here is a 143-residue protein sequence, read N- to C-terminus: MTEQVKKRPSPRRRARECAVQALYSFQISQNPVETVELSFVTDQDMKGVDMPYFRKLFRQTVENIPSVDSTMAPYLDRSANELDPIEKAILRLAVYELKYELDVPYKVVINEAIEVAKTFGAEDSHKYINGVLDKIAPALARK.

Belongs to the NusB family.

Its function is as follows. Involved in transcription antitermination. Required for transcription of ribosomal RNA (rRNA) genes. Binds specifically to the boxA antiterminator sequence of the ribosomal RNA (rrn) operons. The chain is Transcription antitermination protein NusB from Mannheimia succiniciproducens (strain KCTC 0769BP / MBEL55E).